Reading from the N-terminus, the 245-residue chain is 4-hydroxy-tetrahydrodipicolinate reductase (245 aa).

Residues 7–12 (GAKGKV), 75–77 (GTT), and 102–105 (APNF) each bind NAD(+). The active-site Proton donor/acceptor is the His-132. Residue His-133 coordinates (S)-2,3,4,5-tetrahydrodipicolinate. The Proton donor role is filled by Lys-136. Residue 142 to 143 (GT) coordinates (S)-2,3,4,5-tetrahydrodipicolinate.

It belongs to the DapB family.

The protein resides in the cytoplasm. It catalyses the reaction (S)-2,3,4,5-tetrahydrodipicolinate + NAD(+) + H2O = (2S,4S)-4-hydroxy-2,3,4,5-tetrahydrodipicolinate + NADH + H(+). The catalysed reaction is (S)-2,3,4,5-tetrahydrodipicolinate + NADP(+) + H2O = (2S,4S)-4-hydroxy-2,3,4,5-tetrahydrodipicolinate + NADPH + H(+). It functions in the pathway amino-acid biosynthesis; L-lysine biosynthesis via DAP pathway; (S)-tetrahydrodipicolinate from L-aspartate: step 4/4. Catalyzes the conversion of 4-hydroxy-tetrahydrodipicolinate (HTPA) to tetrahydrodipicolinate. The polypeptide is 4-hydroxy-tetrahydrodipicolinate reductase (Mycobacterium bovis (strain ATCC BAA-935 / AF2122/97)).